The primary structure comprises 490 residues: Auxin transporter-like protein 5 (490 aa).

The Cytoplasmic segment spans residues 1-55 (MEMANDKVAETVIVGNYVEMESEGKPPQDIKSKLSNFLWHGGSAYDAWFSCASNQ). Residues 56–73 (VAQVLLTLPYSFSQLGML) traverse the membrane as a helical segment. Topologically, residues 74-75 (SG) are extracellular. The helical transmembrane segment at 76 to 96 (ILFQLFYGILGSWTAYLISIL) threads the bilayer. Residues 97 to 132 (YVEYRTRKEREKVNFRSHVIQWFEVLDGLLGKHWRN) lie on the Cytoplasmic side of the membrane. A helical transmembrane segment spans residues 133–153 (VGLGFNCTFLLFGSVIQLIAC). Residues 154–168 (ASNIYYINDNLDKRT) lie on the Extracellular side of the membrane. Residues 169-189 (WTYIFGACCATTVFIPSFHNY) traverse the membrane as a helical segment. Arg-190 is a topological domain (cytoplasmic). The helical transmembrane segment at 191–211 (IWSFLGLVMTTYTAWYLTIAA) threads the bilayer. At 212 to 227 (VLHGQVEGVKHSGPNK) the chain is on the extracellular side. The helical transmembrane segment at 228-248 (IILYFTGATNILYTFGGHAVT) threads the bilayer. Topologically, residues 249–262 (VEIMHAMWKPQKFK) are cytoplasmic. Residues 263–283 (AIYLLATLYVLTLTIPSATAV) traverse the membrane as a helical segment. Over 284 to 310 (YWAFGDMLLNHSNAFALLPKSPFRDMA) the chain is Extracellular. N-linked (GlcNAc...) asparagine glycosylation is present at Asn-293. The helical transmembrane segment at 311–331 (VILMLIHQFITFGFACTPLYF) threads the bilayer. Residues 332-352 (VWEKTVGMHECKSLCKRALVR) are Cytoplasmic-facing. A helical transmembrane segment spans residues 353–373 (LPVVIPIWFLAIIFPFFGPIN). Topologically, residues 374 to 376 (STV) are extracellular. Residues 377-397 (GSLLVSFTVYIIPALAHIFTF) traverse the membrane as a helical segment. At 398–420 (KSSSARQNAVEQPPKFVGRWVGT) the chain is on the cytoplasmic side. The chain crosses the membrane as a helical span at residues 421–441 (FVINVFIVVWVLIVGFGFGGW). The Extracellular portion of the chain corresponds to 442-490 (ASMVNFVHQIDTFGLFTKCYQCPPPTPSVPTMPPHQMNATAPSPHHHHH). The N-linked (GlcNAc...) asparagine glycan is linked to Asn-479.

The protein belongs to the amino acid/polyamine transporter 2 family. Amino acid/auxin permease (AAAP) (TC 2.A.18.1) subfamily. In terms of tissue distribution, shoots and roots of nodulating plants, at low levels.

The protein resides in the cell membrane. Functionally, carrier protein involved in proton-driven auxin influx. Mediates the formation of auxin gradient from developing leaves (site of auxin biosynthesis) to tips by contributing to the loading of auxin in vascular tissues and facilitating acropetal (base to tip) auxin transport within inner tissues of the root apex, and basipetal (tip to base) auxin transport within outer tissues of the root apex. May be involved in lateral roots and nodules formation. In Medicago truncatula (Barrel medic), this protein is Auxin transporter-like protein 5 (LAX5).